Here is a 343-residue protein sequence, read N- to C-terminus: Heat-inducible transcription repressor HrcA (343 aa).

It belongs to the HrcA family.

In terms of biological role, negative regulator of class I heat shock genes (grpE-dnaK-dnaJ and groELS operons). Prevents heat-shock induction of these operons. This is Heat-inducible transcription repressor HrcA from Bacillus licheniformis (strain ATCC 14580 / DSM 13 / JCM 2505 / CCUG 7422 / NBRC 12200 / NCIMB 9375 / NCTC 10341 / NRRL NRS-1264 / Gibson 46).